Here is a 157-residue protein sequence, read N- to C-terminus: Mannose-specific lectin (157 aa).

Positions 1-19 (MAKASLLILAAIFLGVITP) form a signal peptide, or 23; in 70% of the molecules. In terms of domain architecture, Bulb-type lectin spans 24-132 (DNILYSGETL…DRWATGTHTG (109 aa)). Alpha-D-mannopyranose contacts are provided by Gln49, Asp51, Asn53, Tyr57, Asp60, Lys61, Trp64, Ala65, Asn67, Gln80, Asp82, Asn84, Tyr88, Ile95, Trp96, Asn99, Asn106, Gln112, Asp114, Asn116, Tyr120, and Trp125. Cysteines 52 and 75 form a disulfide. Positions 129 to 157 (THTGLVGIPASPPSEKYPTAGKIKLVTAK) are cleaved as a propeptide — removed in mature form.

Homotetramer.

The protein resides in the secreted. Its function is as follows. Mannose-specific lectin which binds alpha-D-linked mannose. Displays a high affinity for alpha-(1-3)-mannose oligomers. Displays antiviral activity and therefore may contribute to defense against infections. The sequence is that of Mannose-specific lectin from Galanthus nivalis (Common snowdrop).